A 1122-amino-acid chain; its full sequence is Maestro heat-like repeat-containing protein family member 7 (1122 aa).

Disordered stretches follow at residues 1–144 and 183–203; these read MALS…LSED and SHTI…NTSL. Residues 33 to 65 are compositionally biased toward low complexity; the sequence is TTPRPTPDLTLAPLPAHGVALAPALHPALSPDP. 3 stretches are compositionally biased toward polar residues: residues 75-95, 120-136, and 184-203; these read DISN…INTA, PVPS…SPEN, and HTIS…NTSL. N-linked (GlcNAc...) asparagine glycosylation is found at Asn200, Asn210, Asn255, Asn267, and Asn296. Residues 246 to 265 are disordered; sequence WNTGSKGSVNVTSNSQPRSG. Ser356 is modified (phosphoserine). The disordered stretch occupies residues 363–385; that stretch reads FRSPPEGTSEDAKANESEKRDHD. The span at 372-385 shows a compositional bias: basic and acidic residues; the sequence is EDAKANESEKRDHD. 2 N-linked (GlcNAc...) asparagine glycosylation sites follow: Asn541 and Asn546. The next 2 helical transmembrane spans lie at 548 to 568 and 722 to 742; these read TLVT…LLLG and LLPI…ALLM. HEAT repeat units follow at residues 913–950, 992–1029, 1035–1072, and 1080–1117; these read QELC…MEQV, TKVQ…GQAK, SVYI…KLRM, and EQLT…FFLL.

It localises to the membrane. This chain is Maestro heat-like repeat-containing protein family member 7 (Mroh7), found in Rattus norvegicus (Rat).